The sequence spans 184 residues: Probable type 3 secretion system regulator AscH (184 aa).

The tract at residues 1-25 (MKIEGSDQLGGEQPQRQPLPPESMA) is disordered.

It belongs to the YopR family.

The protein localises to the secreted. May be involved in the regulation of the assembly of the type III secretion system (T3SS), also called injectisome, which is used to inject bacterial effector proteins into eukaryotic host cells. May control the polymerization of the needle. This chain is Probable type 3 secretion system regulator AscH, found in Aeromonas salmonicida subsp. salmonicida.